The primary structure comprises 443 residues: Tubulin beta chain (443 aa).

The GTP site is built by Gln-11, Glu-69, Ser-138, Gly-142, Thr-143, Gly-144, Asn-204, and Asn-226. Glu-69 is a Mg(2+) binding site. The tract at residues 424–443 (QYQDATAEEEGEFEEEEGEN) is disordered. Over residues 429-443 (TAEEEGEFEEEEGEN) the composition is skewed to acidic residues.

This sequence belongs to the tubulin family. In terms of assembly, dimer of alpha and beta chains. A typical microtubule is a hollow water-filled tube with an outer diameter of 25 nm and an inner diameter of 15 nM. Alpha-beta heterodimers associate head-to-tail to form protofilaments running lengthwise along the microtubule wall with the beta-tubulin subunit facing the microtubule plus end conferring a structural polarity. Microtubules usually have 13 protofilaments but different protofilament numbers can be found in some organisms and specialized cells. It depends on Mg(2+) as a cofactor.

It is found in the cytoplasm. It localises to the cytoskeleton. In terms of biological role, tubulin is the major constituent of microtubules, a cylinder consisting of laterally associated linear protofilaments composed of alpha- and beta-tubulin heterodimers. Microtubules grow by the addition of GTP-tubulin dimers to the microtubule end, where a stabilizing cap forms. Below the cap, tubulin dimers are in GDP-bound state, owing to GTPase activity of alpha-tubulin. The chain is Tubulin beta chain (BETA-TT1) from Tetrahymena pyriformis.